The chain runs to 352 residues: Ion-translocating oxidoreductase complex subunit D (352 aa).

The next 4 helical transmembrane spans lie at 20–40 (IMLLVVIAALPGIAAQTWFFG), 42–62 (GTLFQIVLAAITALVAEAIVL), 69–91 (VASHLQDYSALLTGLLLAVSIPP), and 123–143 (PAMIGYVVLLISFPVQMTSWL). Thr-187 is modified (FMN phosphoryl threonine). The next 5 helical transmembrane spans lie at 215 to 235 (LAGVGWQWVNLAWLVGGVFLL), 242 to 262 (WHIPVSFLLTLALCAALGWLF), 267 to 287 (LASPQLHLLSGATMLGAFFIL), 301 to 321 (LIFGALAGVLVWLIRSFGGYP), and 322 to 342 (DGVAFAVLLANITVPLIDYYT).

It belongs to the NqrB/RnfD family. The complex is composed of six subunits: RsxA, RsxB, RsxC, RsxD, RsxE and RsxG. The cofactor is FMN.

Its subcellular location is the cell inner membrane. Part of a membrane-bound complex that couples electron transfer with translocation of ions across the membrane. Required to maintain the reduced state of SoxR. The protein is Ion-translocating oxidoreductase complex subunit D of Salmonella agona (strain SL483).